Here is a 348-residue protein sequence, read N- to C-terminus: Benzoate 1,2-dioxygenase electron transfer component (348 aa).

Residues His-14–Ser-109 enclose the 2Fe-2S ferredoxin-type domain. Residues Cys-51, Cys-56, Cys-59, and Cys-93 each contribute to the [2Fe-2S] cluster site. Residues Val-111–Asn-348 form a ferredoxin-reductase region. The FAD-binding FR-type domain maps to Ile-116–Arg-217.

This sequence belongs to the bacterial ring-hydroxylating dioxygenase ferredoxin reductase family. As to quaternary structure, this dioxygenase system consists of three proteins: the two subunits of the hydroxylase component (BenA and BenB), and an electron transfer component (BenC). Requires FAD as cofactor. The cofactor is [2Fe-2S] cluster.

The catalysed reaction is 2 reduced [2Fe-2S]-[ferredoxin] + NAD(+) + H(+) = 2 oxidized [2Fe-2S]-[ferredoxin] + NADH. It functions in the pathway xenobiotic degradation; toluene degradation. Electron transfer component of benzoate 1,2-dioxygenase system. The chain is Benzoate 1,2-dioxygenase electron transfer component (benC) from Acinetobacter baylyi (strain ATCC 33305 / BD413 / ADP1).